We begin with the raw amino-acid sequence, 169 residues long: MAETIRIIGIDPGLRRTGWGVIDFSGNRLQFVAAGTLSSDARCDLASRLCQLYKGLSDILHQFMPHEAAVEHVFVNKDATATLKLGQARAIALLAPAQANLPVFEYAPNKVKKSVIGVGHGAKEQIHMMVKVLLPRAEFDSSDAADALALALCHSTHRTSASHYARITA.

Catalysis depends on residues D11, E71, and D143. Mg(2+)-binding residues include D11, E71, and D143.

The protein belongs to the RuvC family. In terms of assembly, homodimer which binds Holliday junction (HJ) DNA. The HJ becomes 2-fold symmetrical on binding to RuvC with unstacked arms; it has a different conformation from HJ DNA in complex with RuvA. In the full resolvosome a probable DNA-RuvA(4)-RuvB(12)-RuvC(2) complex forms which resolves the HJ. It depends on Mg(2+) as a cofactor.

It is found in the cytoplasm. The enzyme catalyses Endonucleolytic cleavage at a junction such as a reciprocal single-stranded crossover between two homologous DNA duplexes (Holliday junction).. Its function is as follows. The RuvA-RuvB-RuvC complex processes Holliday junction (HJ) DNA during genetic recombination and DNA repair. Endonuclease that resolves HJ intermediates. Cleaves cruciform DNA by making single-stranded nicks across the HJ at symmetrical positions within the homologous arms, yielding a 5'-phosphate and a 3'-hydroxyl group; requires a central core of homology in the junction. The consensus cleavage sequence is 5'-(A/T)TT(C/G)-3'. Cleavage occurs on the 3'-side of the TT dinucleotide at the point of strand exchange. HJ branch migration catalyzed by RuvA-RuvB allows RuvC to scan DNA until it finds its consensus sequence, where it cleaves and resolves the cruciform DNA. The protein is Crossover junction endodeoxyribonuclease RuvC of Bartonella quintana (strain Toulouse) (Rochalimaea quintana).